A 451-amino-acid polypeptide reads, in one-letter code: ATP synthase subunit beta (451 aa).

Residue 143–150 (GGAGVGKT) coordinates ATP.

It belongs to the ATPase alpha/beta chains family. F-type ATPases have 2 components, CF(1) - the catalytic core - and CF(0) - the membrane proton channel. CF(1) has five subunits: alpha(3), beta(3), gamma(1), delta(1), epsilon(1). CF(0) has three main subunits: a(1), b(2) and c(9-12). The alpha and beta chains form an alternating ring which encloses part of the gamma chain. CF(1) is attached to CF(0) by a central stalk formed by the gamma and epsilon chains, while a peripheral stalk is formed by the delta and b chains.

It is found in the cell membrane. It carries out the reaction ATP + H2O + 4 H(+)(in) = ADP + phosphate + 5 H(+)(out). Its function is as follows. Produces ATP from ADP in the presence of a proton gradient across the membrane. The catalytic sites are hosted primarily by the beta subunits. This chain is ATP synthase subunit beta, found in Coprothermobacter proteolyticus (strain ATCC 35245 / DSM 5265 / OCM 4 / BT).